The primary structure comprises 155 residues: Small ribosomal subunit protein uS9 (155 aa).

Belongs to the universal ribosomal protein uS9 family.

The polypeptide is Small ribosomal subunit protein uS9 (Rhizobium johnstonii (strain DSM 114642 / LMG 32736 / 3841) (Rhizobium leguminosarum bv. viciae)).